The chain runs to 232 residues: MKELQTVLKNHFEIEFADKKLLETAFTHTSYANEHRLLKISHNERLEFLGDAVLQLLISEYLYKKYPKKPEGDLSKLRAMIVREESLAGFARDCQFDQFIKLGKGEEKSGGRNRDTILGDAFEAFLGALLLDKDVAKVKEFIYQVMIPKVEAGEFEMITDYKTHLQELLQVNGDVAIRYQVISETGPAHDKVFDVEVLVEGKSIGQGQGRSKKLAEQEAAKNAVEKGLDSCI.

An RNase III domain is found at 5 to 134 (QTVLKNHFEI…FLGALLLDKD (130 aa)). Position 47 (E47) interacts with Mg(2+). D51 is an active-site residue. Residues D120 and E123 each contribute to the Mg(2+) site. The active site involves E123. The 70-residue stretch at 160–229 (DYKTHLQELL…AKNAVEKGLD (70 aa)) folds into the DRBM domain.

It belongs to the ribonuclease III family. As to quaternary structure, homodimer. It depends on Mg(2+) as a cofactor.

It localises to the cytoplasm. It catalyses the reaction Endonucleolytic cleavage to 5'-phosphomonoester.. Digests double-stranded RNA. Involved in the processing of primary rRNA transcript to yield the immediate precursors to the large and small rRNAs (23S and 16S). Processes some mRNAs, and tRNAs when they are encoded in the rRNA operon. Processes pre-crRNA and tracrRNA of type II CRISPR loci if present in the organism. In Streptococcus pneumoniae (strain ATCC BAA-255 / R6), this protein is Ribonuclease 3.